A 565-amino-acid chain; its full sequence is Heme/hemopexin transporter protein HuxB (565 aa).

Positions 1 to 26 are cleaved as a signal peptide; that stretch reads MKMRPRYSVIASAVSLGFVLSKSVMA. Positions 73–150 constitute a POTRA domain; that stretch reads FPLTQVQILD…GTVKILLLKG (78 aa).

This sequence belongs to the TPS (TC 1.B.20) family.

It localises to the cell outer membrane. Functionally, likely functions in the release of soluble HxuA from the cell. Probable member of a two partner secretion pathway (TPS) in which it mediates the secretion of HuxA. This chain is Heme/hemopexin transporter protein HuxB (hxuB), found in Haemophilus influenzae.